The chain runs to 459 residues: Putrescine aminotransferase (459 aa).

Pyridoxal 5'-phosphate-binding positions include 150–151 (GT) and Gln-274. Position 300 is an N6-(pyridoxal phosphate)lysine (Lys-300). Thr-332 is a binding site for pyridoxal 5'-phosphate.

It belongs to the class-III pyridoxal-phosphate-dependent aminotransferase family. Putrescine aminotransferase subfamily. The cofactor is pyridoxal 5'-phosphate.

The catalysed reaction is an alkane-alpha,omega-diamine + 2-oxoglutarate = an omega-aminoaldehyde + L-glutamate. It catalyses the reaction putrescine + 2-oxoglutarate = 1-pyrroline + L-glutamate + H2O. It carries out the reaction cadaverine + 2-oxoglutarate = 5-aminopentanal + L-glutamate. The protein operates within amine and polyamine degradation; putrescine degradation; 4-aminobutanal from putrescine (transaminase route): step 1/1. Catalyzes the aminotransferase reaction from putrescine to 2-oxoglutarate, leading to glutamate and 4-aminobutanal, which spontaneously cyclizes to form 1-pyrroline. This is the first step in one of two pathways for putrescine degradation, where putrescine is converted into 4-aminobutanoate (gamma-aminobutyrate or GABA) via 4-aminobutanal. Also functions as a cadaverine transaminase in a a L-lysine degradation pathway to succinate that proceeds via cadaverine, glutarate and L-2-hydroxyglutarate. This chain is Putrescine aminotransferase, found in Escherichia coli (strain ATCC 8739 / DSM 1576 / NBRC 3972 / NCIMB 8545 / WDCM 00012 / Crooks).